The following is a 559-amino-acid chain: Nucleoprotein (559 aa).

A binding site for the cap structure m7GTP region spans residues 53–235 (MRKEKRTDSD…ITQEQSQINI (183 aa)). Mn(2+)-binding residues include Asp378 and Glu380. 4 residues coordinate Zn(2+): Glu388, Cys495, His498, and Cys519. Asp523 serves as a coordination point for Mn(2+).

Belongs to the arenaviridae nucleocapsid protein family. As to quaternary structure, homomultimerizes to form the nucleocapsid. Binds to viral genomic RNA. Interacts with glycoprotein G2. Interacts with protein Z; this interaction probably directs the encapsidated genome to budding sites. Interacts with protein L; this interaction does not interfere with Z-L interaction. Interacts with host IKBKE (via Protein kinase domain); the interaction inhibits IKBKE kinase activity.

The protein resides in the virion. It is found in the host cytoplasm. In terms of biological role, encapsidates the genome, protecting it from nucleases. The encapsidated genomic RNA is termed the nucleocapsid (NC). Serves as template for viral transcription and replication. The increased presence of protein N in host cell does not seem to trigger the switch from transcription to replication as observed in other negative strain RNA viruses. Through the interaction with host IKBKE, strongly inhibits the phosphorylation and nuclear translocation of host IRF3, a protein involved in interferon activation pathway, leading to the inhibition of interferon-beta and IRF3-dependent promoters activation. Also encodes a functional 3'-5' exoribonuclease that degrades preferentially dsRNA substrates and thereby participates in the suppression of interferon induction. The sequence is that of Nucleoprotein from Sooretamys angouya (Paraguayan rice rat).